The sequence spans 61 residues: Small ribosomal subunit protein uS14B (61 aa).

The Zn(2+) site is built by cysteine 24, cysteine 27, cysteine 40, and cysteine 43.

This sequence belongs to the universal ribosomal protein uS14 family. Zinc-binding uS14 subfamily. As to quaternary structure, part of the 30S ribosomal subunit. Contacts proteins S3 and S10. Zn(2+) is required as a cofactor.

Its function is as follows. Binds 16S rRNA, required for the assembly of 30S particles and may also be responsible for determining the conformation of the 16S rRNA at the A site. In Cutibacterium acnes (strain DSM 16379 / KPA171202) (Propionibacterium acnes), this protein is Small ribosomal subunit protein uS14B.